The following is a 365-amino-acid chain: D-alanine--D-alanine ligase (365 aa).

One can recognise an ATP-grasp domain in the interval 156–360; that stretch reads KKLMAAEGLP…YAQLLDNLIE (205 aa). Residue 183 to 238 coordinates ATP; it reads KRELGLPVFVKPARGGSSIGISRVADWSEWDAALSLAREHDSKVIVEAEIVGVEVE. The Mg(2+) site is built by Asp-315, Glu-327, and Asn-329.

The protein belongs to the D-alanine--D-alanine ligase family. The cofactor is Mg(2+). Mn(2+) is required as a cofactor.

The protein resides in the cytoplasm. The enzyme catalyses 2 D-alanine + ATP = D-alanyl-D-alanine + ADP + phosphate + H(+). It functions in the pathway cell wall biogenesis; peptidoglycan biosynthesis. In terms of biological role, cell wall formation. The polypeptide is D-alanine--D-alanine ligase (Corynebacterium diphtheriae (strain ATCC 700971 / NCTC 13129 / Biotype gravis)).